The sequence spans 185 residues: Large ribosomal subunit protein uL5 (185 aa).

This sequence belongs to the universal ribosomal protein uL5 family. As to quaternary structure, part of the 50S ribosomal subunit; contacts the 5S rRNA and probably tRNA. Forms a bridge to the 30S subunit in the 70S ribosome.

In terms of biological role, this is one of the proteins that bind and probably mediate the attachment of the 5S RNA into the large ribosomal subunit, where it forms part of the central protuberance. In the 70S ribosome it contacts protein S13 of the 30S subunit (bridge B1b), connecting the 2 subunits; this bridge is implicated in subunit movement. May contact the P site tRNA; the 5S rRNA and some of its associated proteins might help stabilize positioning of ribosome-bound tRNAs. The sequence is that of Large ribosomal subunit protein uL5 from Haloquadratum walsbyi (strain DSM 16790 / HBSQ001).